Here is a 440-residue protein sequence, read N- to C-terminus: MESQQLSQHSHISHGSACASVTSKEVHTNQDPLDVSASKTEECEKASTKANSQQTTTPASSAVPENPHHASPQTAQSHSPQNGPYPQQCMMTQNQANPSGWSFYGHPSMIPYTPYQMSPMYFPPGPQSQFPQYPSSVGTPLSTPSPESGNTFTDSSSADSDMTSTKKYVRPPPMLTSPNDFPNWVKTYIKFLQNSNLGGIIPTVNGKPVRQITDDELTFLYNTFQIFAPSQFLPTWVKDILSVDYTDIMKILSKSIEKMQSDTQEANDIVTLANLQYNGSTPADAFETKVTNIIDRLNNNGIHINNKVACQLIMRGLSGEYKFLRYTRHRHLNMTVAELFLDIHAIYEEQQGSRNSKPNYRRNPSDEKNDSRSYTNTTKPKVIARNPQKTNNSKSKTARAHNVSTSNNSPSTDNDSISKSTTEPIQLNNKHDLHLRPETY.

The span at 1–16 (MESQQLSQHSHISHGS) shows a compositional bias: low complexity. Disordered stretches follow at residues 1–93 (MESQ…MMTQ), 126–173 (PQSQ…RPPP), and 352–440 (GSRN…PETY). Polar residues-rich tracts occupy residues 48 to 60 (TKAN…TPAS), 71 to 93 (SPQT…MMTQ), and 127 to 152 (QSQF…GNTF). Over residues 153–165 (TDSSSADSDMTST) the composition is skewed to low complexity. Residues 299–401 (NNGIHINNKV…NSKSKTARAH (103 aa)) form an RNA-binding region. The span at 402-418 (NVSTSNNSPSTDNDSIS) shows a compositional bias: low complexity. Ser-416 bears the Phosphoserine mark. Residues 419–428 (KSTTEPIQLN) are compositionally biased toward polar residues. Residues 429–440 (NKHDLHLRPETY) are compositionally biased toward basic and acidic residues.

Homotrimer.

It localises to the cytoplasm. Functionally, capsid protein (CA) is the structural component of the virus-like particle (VLP), forming the shell that encapsulates the retrotransposons dimeric RNA genome. The particles are assembled from trimer-clustered units and there are holes in the capsid shells that allow for the diffusion of macromolecules. CA also has nucleocapsid-like chaperone activity, promoting primer tRNA(i)-Met annealing to the multipartite primer-binding site (PBS), dimerization of Ty1 RNA and initiation of reverse transcription. This chain is Transposon Ty1-JR2 Gag polyprotein (TY1A-JR2), found in Saccharomyces cerevisiae (strain ATCC 204508 / S288c) (Baker's yeast).